The sequence spans 432 residues: Enolase (432 aa).

Gln-168 contributes to the (2R)-2-phosphoglycerate binding site. The Proton donor role is filled by Glu-210. Mg(2+)-binding residues include Asp-247, Glu-288, and Asp-315. (2R)-2-phosphoglycerate is bound by residues Lys-340, Arg-369, Ser-370, and Lys-391. Lys-340 serves as the catalytic Proton acceptor.

The protein belongs to the enolase family. It depends on Mg(2+) as a cofactor.

Its subcellular location is the cytoplasm. The protein localises to the secreted. It localises to the cell surface. It carries out the reaction (2R)-2-phosphoglycerate = phosphoenolpyruvate + H2O. It participates in carbohydrate degradation; glycolysis; pyruvate from D-glyceraldehyde 3-phosphate: step 4/5. In terms of biological role, catalyzes the reversible conversion of 2-phosphoglycerate (2-PG) into phosphoenolpyruvate (PEP). It is essential for the degradation of carbohydrates via glycolysis. This chain is Enolase, found in Microcystis aeruginosa (strain NIES-843 / IAM M-2473).